The following is a 134-amino-acid chain: Small ribosomal subunit protein uS11 (134 aa).

The tract at residues 114–134 (DVTPVPSDSTRRKGGRRGRRL) is disordered. A compositionally biased stretch (basic residues) spans 125–134 (RKGGRRGRRL).

Belongs to the universal ribosomal protein uS11 family.

This Candida albicans (Yeast) protein is Small ribosomal subunit protein uS11 (RPS14).